A 94-amino-acid polypeptide reads, in one-letter code: Aspartyl/glutamyl-tRNA(Asn/Gln) amidotransferase subunit C (94 aa).

This sequence belongs to the GatC family. As to quaternary structure, heterotrimer of A, B and C subunits.

The catalysed reaction is L-glutamyl-tRNA(Gln) + L-glutamine + ATP + H2O = L-glutaminyl-tRNA(Gln) + L-glutamate + ADP + phosphate + H(+). It carries out the reaction L-aspartyl-tRNA(Asn) + L-glutamine + ATP + H2O = L-asparaginyl-tRNA(Asn) + L-glutamate + ADP + phosphate + 2 H(+). Functionally, allows the formation of correctly charged Asn-tRNA(Asn) or Gln-tRNA(Gln) through the transamidation of misacylated Asp-tRNA(Asn) or Glu-tRNA(Gln) in organisms which lack either or both of asparaginyl-tRNA or glutaminyl-tRNA synthetases. The reaction takes place in the presence of glutamine and ATP through an activated phospho-Asp-tRNA(Asn) or phospho-Glu-tRNA(Gln). In Solidesulfovibrio magneticus (strain ATCC 700980 / DSM 13731 / RS-1) (Desulfovibrio magneticus), this protein is Aspartyl/glutamyl-tRNA(Asn/Gln) amidotransferase subunit C.